Consider the following 3550-residue polypeptide: Zinc finger homeobox protein 4 (3550 aa).

Position 1 is an N-acetylmethionine (Met-1). Disordered regions lie at residues 1–54 (METC…LKTD), 426–479 (HLSS…AYSN), and 521–614 (TSSS…IECP). The span at 9-20 (ISRQENGQSTSK) shows a compositional bias: polar residues. Basic and acidic residues-rich tracts occupy residues 39–54 (EPDR…LKTD) and 433–451 (KMSE…KEST). The segment covering 467–479 (EPGDEDEEDAYSN) has biased composition (acidic residues). Polar residues-rich tracts occupy residues 542–553 (GRSNGNVTNSYS) and 566–576 (RDGTTAAPSET). C2H2-type zinc fingers lie at residues 611–634 (IECP…TMMH), 642–665 (LKCP…KEKH), and 697–721 (FRCE…SDKH). Residues 739 to 763 (HSAPTPNTSLSGCGTPSPSKPKQKP) are disordered. Residues 742-752 (PTPNTSLSGCG) show a composition bias toward polar residues. C2H2-type zinc fingers lie at residues 765–787 (RRCE…MTSE), 915–939 (YQCK…TDKH), 971–993 (LKCN…TTNH), and 1019–1043 (YYCA…SVKH). Residues 1100–1142 (KAASEEPSEDAGDPLKPPTVAEDDEKEAHKRDNSEGKISTKDP) form a disordered region. A compositionally biased stretch (basic and acidic residues) spans 1125-1142 (KEAHKRDNSEGKISTKDP). A Glycyl lysine isopeptide (Lys-Gly) (interchain with G-Cter in SUMO2) cross-link involves residue Lys-1165. C2H2-type zinc fingers lie at residues 1188-1211 (YQYP…LSQH) and 1217-1240 (ICCP…THLH). Residues 1271–1339 (APEKSEQDPP…EWNKTSSKDV (69 aa)) form a disordered region. Residues 1297–1326 (VDDKSMSGLEDSKVGVEIKNEEQKPAKEPV) are compositionally biased toward basic and acidic residues. Residue Lys-1315 forms a Glycyl lysine isopeptide (Lys-Gly) (interchain with G-Cter in SUMO2) linkage. 2 C2H2-type zinc fingers span residues 1368-1390 (YRCN…SQYH) and 1396-1419 (TMCT…EAGH). The tract at residues 1467-1492 (EGKASPVESDGSSIPDDLGLEPKRTL) is disordered. A C2H2-type 12 zinc finger spans residues 1512–1538 (YKCTVCKESFTQKNILLVHYNSVSHLH). Lys-1562 participates in a covalent cross-link: Glycyl lysine isopeptide (Lys-Gly) (interchain with G-Cter in SUMO2). Residues 1564-1588 (YKCSTCSVAYSQSSTLEIHMRSVLH) form a C2H2-type 13 zinc finger. Positions 1779-1873 (PQLQPQNQQP…CIPPPRIASG (95 aa)) are disordered. The segment covering 1792 to 1808 (QQQQPQQQPSKLLKQEQ) has biased composition (low complexity). A Glycyl lysine isopeptide (Lys-Gly) (interchain with G-Cter in SUMO2) cross-link involves residue Lys-1805. Residues 1823–1860 (PSYKEAEEVTEKQEKPKQEFINDTEGLKDSKDIKKQKS) show a composition bias toward basic and acidic residues. A C2H2-type 14 zinc finger spans residues 1916–1939 (LECGICGKLFSNVLILKSHQEHVH). A disordered region spans residues 1984–2006 (KIPNTVSAPLQAPPPTPPSAPQQ). The span at 1994–2003 (QAPPPTPPSA) shows a compositional bias: pro residues. 2 consecutive DNA-binding regions (homeobox) follow at residues 2069–2128 (FKRP…RQRN) and 2166–2225 (KRSS…RKSY). The C2H2-type 15; degenerate zinc finger occupies 2252 to 2276 (YQCKKCNVVFPRIFDLITHQKKQCY). Positions 2318–2331 (TLVASSGSGTSTPL) are enriched in polar residues. Positions 2318–2412 (TLVASSGSGT…SQTPIPSSPL (95 aa)) are disordered. Residues 2337–2355 (PEPEKNSPKTEYPGEKTKQ) show a composition bias toward basic and acidic residues. The span at 2356-2376 (SDPSLPQGTKSAPSSVLTSSE) shows a compositional bias: polar residues. The segment covering 2383-2392 (PQPPTQPPKQ) has biased composition (pro residues). Residues 2401–2412 (SASQTPIPSSPL) show a composition bias toward polar residues. The segment at 2430-2452 (YPCDQCTLAFPTLELWKEHQHMH) adopts a C2H2-type 16 zinc-finger fold. Polar residues predominate over residues 2490–2508 (GSSLTQMPPQTSTAHTTAP). Positions 2490–2545 (GSSLTQMPPQTSTAHTTAPASVAASLKRKLEDKEDNNCSEKEGGNSGEDQHRDKRL) are disordered. The span at 2517 to 2541 (RKLEDKEDNNCSEKEGGNSGEDQHR) shows a compositional bias: basic and acidic residues. Residues 2542 to 2601 (DKRLRTTITPEQLEILYEKYLLDSNPTRKMLDHIAREVGLKKRVVQVWFQNTRARERKGQ) constitute a DNA-binding region (homeobox 3). The C2H2-type 17 zinc finger occupies 2612-2635 (KRCPFCRALFKAKSALESHIRSRH). Ser-2645 is subject to Phosphoserine. 2 disordered regions span residues 2746 to 2791 (AISD…ATTP) and 2810 to 2866 (HFND…PGHK). The segment covering 2781 to 2791 (LDSLQKPATTP) has biased composition (polar residues). Over residues 2811 to 2820 (FNDKDGDHDQ) the composition is skewed to basic and acidic residues. The segment covering 2843-2855 (PSSPNPFGSSNPF) has biased composition (low complexity). A DNA-binding region (homeobox 4) is located at residues 2865–2924 (HKRFRTQMSNLQLKVLKACFSDYRTPTMQECEMLGNEIGLPKRVVQVWFQNARAKERKFK). The C2H2-type 18 zinc-finger motif lies at 2943–2967 (PECTLCGVKYSARLSIRDHIFSKQH). Disordered stretches follow at residues 3051–3156 (PSSL…EEKI) and 3261–3318 (QDSL…VQLD). A compositionally biased stretch (polar residues) spans 3058-3068 (PQNSNTLTSPG). Low complexity predominate over residues 3075–3088 (PSSATSSPALSLSS). Positions 3097-3109 (TPPPPPPPPPPPS) are enriched in pro residues. Over residues 3136 to 3156 (IKEEESEAIKPEKHPKKEEKI) the composition is skewed to basic and acidic residues. Residue Lys-3137 forms a Glycyl lysine isopeptide (Lys-Gly) (interchain with G-Cter in SUMO2) linkage. Residues 3248-3277 (ALLQQYQQYQQSLQDSLQKQQKQQQEQQQK) are a coiled coil. Over residues 3261-3276 (QDSLQKQQKQQQEQQQ) the composition is skewed to low complexity. Residues 3298 to 3318 (SETKEEKSTAPESTKEEVQLD) are compositionally biased toward basic and acidic residues. A C2H2-type 19; degenerate zinc finger spans residues 3337–3361 (FVCRKCQMMFTDEDATVNHQKSFCY). The segment at 3381 to 3405 (YQCLACDLALSGNEALSQHLQSSLH) adopts a C2H2-type 20 zinc-finger fold. The interval 3424-3445 (LPHSVCSPPPNTSSTSPSAASS) is disordered. Residues 3435–3445 (TSSTSPSAASS) show a composition bias toward low complexity.

Belongs to the krueppel C2H2-type zinc-finger protein family. As to expression, expressed in brain, heart, lung, muscle and small intestine. No expression detected in undifferentiated P19 cells, however, expression was seen following retinoic acid treatment to induce neuronal differentiation. Expressed in undifferentiated C2C12 cells, following induction of muscle differentiation in a low-serum medium, expression levels were decreased.

It localises to the nucleus. In terms of biological role, may play a role in neural and muscle differentiation. May be involved in transcriptional regulation. This is Zinc finger homeobox protein 4 (Zfhx4) from Mus musculus (Mouse).